A 180-amino-acid chain; its full sequence is Acireductone dioxygenase (180 aa).

Residues H97, H99, E103, and H141 each contribute to the Fe(2+) site. Ni(2+) is bound by residues H97, H99, E103, and H141.

The protein belongs to the acireductone dioxygenase (ARD) family. Monomer. It depends on Fe(2+) as a cofactor. Ni(2+) is required as a cofactor.

The enzyme catalyses 1,2-dihydroxy-5-(methylsulfanyl)pent-1-en-3-one + O2 = 3-(methylsulfanyl)propanoate + CO + formate + 2 H(+). The catalysed reaction is 1,2-dihydroxy-5-(methylsulfanyl)pent-1-en-3-one + O2 = 4-methylsulfanyl-2-oxobutanoate + formate + 2 H(+). Its pathway is amino-acid biosynthesis; L-methionine biosynthesis via salvage pathway; L-methionine from S-methyl-5-thio-alpha-D-ribose 1-phosphate: step 5/6. Catalyzes 2 different reactions between oxygen and the acireductone 1,2-dihydroxy-3-keto-5-methylthiopentene (DHK-MTPene) depending upon the metal bound in the active site. Fe-containing acireductone dioxygenase (Fe-ARD) produces formate and 2-keto-4-methylthiobutyrate (KMTB), the alpha-ketoacid precursor of methionine in the methionine recycle pathway. Ni-containing acireductone dioxygenase (Ni-ARD) produces methylthiopropionate, carbon monoxide and formate, and does not lie on the methionine recycle pathway. This is Acireductone dioxygenase from Enterobacter sp. (strain 638).